The chain runs to 199 residues: 5'-deoxynucleotidase YfbR (199 aa).

Residues R18–W19 and H33 contribute to the substrate site. The 113-residue stretch at V30–Y142 folds into the HD domain. Residues H33, H68, and D69 each contribute to the a divalent metal cation site. Substrate is bound by residues D69, D77–T80, and D137. D137 lines the a divalent metal cation pocket.

Belongs to the 5DNU family. As to quaternary structure, homodimer. A divalent metal cation serves as cofactor.

The protein localises to the cytoplasm. It carries out the reaction a 2'-deoxyribonucleoside 5'-phosphate + H2O = a 2'-deoxyribonucleoside + phosphate. In terms of biological role, catalyzes the strictly specific dephosphorylation of 2'-deoxyribonucleoside 5'-monophosphates. The polypeptide is 5'-deoxynucleotidase YfbR (Salmonella arizonae (strain ATCC BAA-731 / CDC346-86 / RSK2980)).